The chain runs to 126 residues: Diadenosine hexaphosphate hydrolase (126 aa).

The Nudix hydrolase domain occupies 1–121 (MELGAGGVVF…EDLGLLEVAL (121 aa)). Residues 21 to 23 (DRM) and 30 to 32 (KGH) each bind substrate. The Nudix box signature appears at 31-52 (GHPEPGESLEEAAVREVWEETG). Mg(2+)-binding residues include glutamate 46 and glutamate 50. Substrate contacts are provided by residues 66–68 (YVN), arginine 74, and glutamate 112.

Belongs to the Nudix hydrolase family. Monomer. It depends on Mg(2+) as a cofactor.

The catalysed reaction is P(1),P(6)-bis(5'-adenosyl) hexaphosphate + H2O = 2 ATP + 2 H(+). It carries out the reaction P(1),P(5)-bis(5'-adenosyl) pentaphosphate + H2O = ADP + ATP + 2 H(+). It catalyses the reaction P(1),P(4)-bis(5'-adenosyl) tetraphosphate + H2O = AMP + ATP + 2 H(+). With respect to regulation, strongly inhibited by fluoride ions. Specifically hydrolyzes (di)adenosine polyphosphates but not ATP or diadenosine triphosphate, generating ATP as the product. Diadenosine hexaphosphate (Ap6A) is the preferred substrate and hydrolysis yields 2 ATP. It is the only enzyme that symmetrically hydrolyzes Ap6A. It also hydrolyzes diadenosine pentaphosphate (Ap5A), diadenosine tetraphosphate (Ap4A) and adenosine tetraphosphate (p4A). In Thermus thermophilus, this protein is Diadenosine hexaphosphate hydrolase.